A 583-amino-acid chain; its full sequence is Mitogen-activated protein kinase 4 (583 aa).

The 293-residue stretch at 20–312 (FIDFQPLGFG…AEMGLQHPYM (293 aa)) folds into the Protein kinase domain. Residues 26-34 (LGFGVNGLV) and K49 each bind ATP. D149 serves as the catalytic Proton acceptor. Phosphoserine; by PAK1, PAK2 and PAK3 is present on S186. An SEG motif motif is present at residues 186 to 188 (SEG). Residues 328–333 (FRIEDE) carry the FRIEDE motif motif. 2 stretches are compositionally biased toward basic and acidic residues: residues 366 to 379 (DRCQDASEVQRDPR) and 391 to 410 (VDPRKDSQSSSERFLEQSHS). The segment at 366-410 (DRCQDASEVQRDPRAGSTPLAEDVQVDPRKDSQSSSERFLEQSHS) is disordered. The residue at position 430 (S430) is a Phosphoserine. The interval 495 to 531 (STQSGSERASPPPDAPEPRLSASPPGHPTPIDGGASP) is disordered.

The protein belongs to the protein kinase superfamily. CMGC Ser/Thr protein kinase family. MAP kinase subfamily. Homodimer. Heterodimer with ERK3/MAPK6. Interacts with (via FRIEDE motif) MAPKAPK5. Mg(2+) serves as cofactor. In terms of processing, phosphorylated at Ser-186 by PAK1, PAK2 and PAK3 resulting in catalytic activation. Phosphorylated by MAPKAPK5 at other sites.

It localises to the cytoplasm. The protein localises to the nucleus. The catalysed reaction is L-seryl-[protein] + ATP = O-phospho-L-seryl-[protein] + ADP + H(+). It carries out the reaction L-threonyl-[protein] + ATP = O-phospho-L-threonyl-[protein] + ADP + H(+). With respect to regulation, activated by phosphorylation at Ser-186. Its function is as follows. Atypical MAPK protein. Phosphorylates microtubule-associated protein 2 (MAP2) and MAPKAPK5. The precise role of the complex formed with MAPKAPK5 is still unclear, but the complex follows a complex set of phosphorylation events: upon interaction with atypical MAPKAPK5, ERK4/MAPK4 is phosphorylated at Ser-186 and then mediates phosphorylation and activation of MAPKAPK5, which in turn phosphorylates ERK4/MAPK4. May promote entry in the cell cycle. In Mus musculus (Mouse), this protein is Mitogen-activated protein kinase 4 (Mapk4).